The primary structure comprises 1683 residues: Phospholipase D1 (1683 aa).

4 disordered regions span residues 1-150 (MSNV…AYTQ), 173-198 (LKSSVNSPTPAGSGHRHNQHQHQQVN), 259-289 (ILDITNSNHNHRGNNNNNTGENSDRRPSIPR), and 384-416 (VMEKKAENKPSSAASAPHTSENNNNDNGSNITS). Residue Ser2 is modified to N-acetylserine. 2 positions are modified to phosphoserine: Ser8 and Ser30. Composition is skewed to basic and acidic residues over residues 20 to 34 (SVTEEVDRVNSRPDE), 63 to 82 (NGKEAERKHALPKSFVDRNL), and 90 to 112 (SLDHIMHSNEHDPRRGSDEENMH). The span at 116–125 (NNLHSSNNNV) shows a compositional bias: low complexity. Over residues 141–150 (RRSSSVAYTQ) the composition is skewed to polar residues. Ser145 bears the Phosphoserine mark. The span at 263 to 279 (TNSNHNHRGNNNNNTGE) shows a compositional bias: low complexity. The 197-residue stretch at 291 to 487 (SSIISISSNV…EFYELSPLGN (197 aa)) folds into the PX domain. The segment covering 392-404 (KPSSAASAPHTSE) has biased composition (polar residues). Over residues 405–416 (NNNNDNGSNITS) the composition is skewed to low complexity. The PH domain maps to 496–664 (QGKQGYLVIR…SSIIKMSTST (169 aa)). 2 consecutive PLD phosphodiesterase domains span residues 791–818 (YFWAHHEKFVVIDETFAFIGGTDLCYGR) and 1091–1118 (EQLYVHAKILIADDRRCIIGSANINERS). Catalysis depends on residues His796, Lys798, Asp803, His1096, Lys1098, and Asp1103. Residues 1430 to 1465 (KDMRRHLSSSTESTRNGSNSLPLNEKSNEGESTNVD) are disordered. The span at 1437 to 1451 (SSSTESTRNGSNSLP) shows a compositional bias: polar residues. Phosphoserine is present on Ser1461. The residue at position 1462 (Thr1462) is a Phosphothreonine.

The protein belongs to the phospholipase D family. As to quaternary structure, interacts with SRF1.

The catalysed reaction is a 1,2-diacyl-sn-glycero-3-phosphocholine + H2O = a 1,2-diacyl-sn-glycero-3-phosphate + choline + H(+). Activity is dependent of phosphatidylinositol 4,5-bisphosphate and the regulator SRF1. Inhibited by magnesium. In terms of biological role, required for meiosis and spore formation. Seems to be involved in the coordinate induction of late meiotic events. PLD activity is induced under sporulation conditions and seems to be necessary to complete the meiotic cycle, but not for vegetative cell growth. This chain is Phospholipase D1 (SPO14), found in Saccharomyces cerevisiae (strain ATCC 204508 / S288c) (Baker's yeast).